The sequence spans 656 residues: Receptor-type tyrosine-protein phosphatase R (656 aa).

Positions 1–23 (MRRAVGFPALCLLLNLHAAGCFS) are cleaved as a signal peptide. Ser-23 carries an O-linked (Xyl...) (chondroitin sulfate) serine glycan. The Extracellular segment spans residues 24-226 (RNNDHFLAIR…EADKIWSKEG (203 aa)). Asn-128 carries N-linked (GlcNAc...) asparagine glycosylation. Residues 227–247 (FYAVVIFLSIFIIIVTCLMII) traverse the membrane as a helical segment. The Cytoplasmic portion of the chain corresponds to 248–656 (YRLKERLQLS…ESRLSPETVE (409 aa)). A disordered region spans residues 269 to 289 (HLSPIARQQAQSEAKTTHSMV). Ser-271 carries the post-translational modification Phosphoserine. Positions 274-289 (ARQQAQSEAKTTHSMV) are enriched in polar residues. Residue Ser-338 is modified to Phosphoserine; by PKA. The region spanning 392-646 (LQSEFMEIPM…EFVHHALCLF (255 aa)) is the Tyrosine-protein phosphatase domain. Residues Asp-553, 587–593 (CSAGIGR), and Gln-631 each bind substrate. Cys-587 acts as the Phosphocysteine intermediate in catalysis.

It belongs to the protein-tyrosine phosphatase family. Receptor class 7 subfamily. As to quaternary structure, interacts with MAPKs. As to expression, expressed in the heart, brain, spleen, lung, liver, skeletal muscle, kidney and testis. Isoform alpha is expressed throughout the granular layer of the cerebellar but not within the Purkinje cells, also in the villi of the ileum and jejunum and both the villi and crypts of the duodenum. Isoform beta is expressed only in the Purkinje cells. Isoform gamma is expressed throughout the brain, the villi and crypts of the duodenum, jejunum and ileum and expressed at low levels in the proximal colon.

Its subcellular location is the cell membrane. It localises to the cytoplasm. It catalyses the reaction O-phospho-L-tyrosyl-[protein] + H2O = L-tyrosyl-[protein] + phosphate. Functionally, sequesters mitogen-activated protein kinases (MAPKs) such as MAPK1, MAPK3 and MAPK14 in the cytoplasm in an inactive form. The MAPKs bind to a dephosphorylated kinase interacting motif, phosphorylation of which by the protein kinase A complex releases the MAPKs for activation and translocation into the nucleus. Isoform gamma may have a role in patterning and cellular proliferation of skeletal elements in the precartilaginous/cartilaginous skeleton. This chain is Receptor-type tyrosine-protein phosphatase R (Ptprr), found in Mus musculus (Mouse).